The sequence spans 455 residues: tRNA-2-methylthio-N(6)-dimethylallyladenosine synthase (455 aa).

Positions 18-136 constitute an MTTase N-terminal domain; the sequence is KLFFIQTYGC…FPEYLNRVKT (119 aa). The [4Fe-4S] cluster site is built by Cys27, Cys63, Cys97, Cys173, Cys177, and Cys180. One can recognise a Radical SAM core domain in the interval 159 to 389; the sequence is RKSDIKGFVT…VEIVNTGIAK (231 aa). The TRAM domain maps to 392-455; sequence KDAEGKIYEV…SFSLIGEVEK (64 aa).

Belongs to the methylthiotransferase family. MiaB subfamily. In terms of assembly, monomer. [4Fe-4S] cluster serves as cofactor.

The protein localises to the cytoplasm. It catalyses the reaction N(6)-dimethylallyladenosine(37) in tRNA + (sulfur carrier)-SH + AH2 + 2 S-adenosyl-L-methionine = 2-methylsulfanyl-N(6)-dimethylallyladenosine(37) in tRNA + (sulfur carrier)-H + 5'-deoxyadenosine + L-methionine + A + S-adenosyl-L-homocysteine + 2 H(+). Catalyzes the methylthiolation of N6-(dimethylallyl)adenosine (i(6)A), leading to the formation of 2-methylthio-N6-(dimethylallyl)adenosine (ms(2)i(6)A) at position 37 in tRNAs that read codons beginning with uridine. The chain is tRNA-2-methylthio-N(6)-dimethylallyladenosine synthase from Clostridium beijerinckii (strain ATCC 51743 / NCIMB 8052) (Clostridium acetobutylicum).